The following is a 102-amino-acid chain: NADH-quinone oxidoreductase subunit K (102 aa).

3 helical membrane-spanning segments follow: residues Phe-6–Ile-26, Leu-30–Ala-50, and Val-62–Gly-82.

This sequence belongs to the complex I subunit 4L family. NDH-1 is composed of 14 different subunits. Subunits NuoA, H, J, K, L, M, N constitute the membrane sector of the complex.

The protein resides in the cell inner membrane. It carries out the reaction a quinone + NADH + 5 H(+)(in) = a quinol + NAD(+) + 4 H(+)(out). NDH-1 shuttles electrons from NADH, via FMN and iron-sulfur (Fe-S) centers, to quinones in the respiratory chain. The immediate electron acceptor for the enzyme in this species is believed to be ubiquinone. Couples the redox reaction to proton translocation (for every two electrons transferred, four hydrogen ions are translocated across the cytoplasmic membrane), and thus conserves the redox energy in a proton gradient. The polypeptide is NADH-quinone oxidoreductase subunit K (Methylococcus capsulatus (strain ATCC 33009 / NCIMB 11132 / Bath)).